The sequence spans 218 residues: Uridine kinase (218 aa).

16 to 23 (GGSGSGKT) contacts ATP.

The protein belongs to the uridine kinase family.

Its subcellular location is the cytoplasm. It carries out the reaction uridine + ATP = UMP + ADP + H(+). The enzyme catalyses cytidine + ATP = CMP + ADP + H(+). It participates in pyrimidine metabolism; CTP biosynthesis via salvage pathway; CTP from cytidine: step 1/3. Its pathway is pyrimidine metabolism; UMP biosynthesis via salvage pathway; UMP from uridine: step 1/1. This is Uridine kinase from Limosilactobacillus reuteri (strain DSM 20016) (Lactobacillus reuteri).